A 424-amino-acid chain; its full sequence is GTPase Obg (424 aa).

The Obg domain occupies 1-160; that stretch reads MFDRVEIRIK…YELILELKLI (160 aa). The 168-residue stretch at 161-328 folds into the OBG-type G domain; that stretch reads ADVAIIGYPN…LLDKVAEKLA (168 aa). GTP-binding positions include 167–174, 192–196, 213–216, 280–283, and 309–311; these read GYPNVGKS, FTTLS, EVPG, NKID, and SAL. Mg(2+) is bound by residues Ser174 and Thr194. The OCT domain occupies 349–424; sequence PAPKGKMGFH…IITGRLEWYL (76 aa).

Belongs to the TRAFAC class OBG-HflX-like GTPase superfamily. OBG GTPase family. In terms of assembly, monomer. Mg(2+) serves as cofactor.

It localises to the cytoplasm. In terms of biological role, an essential GTPase which binds GTP, GDP and possibly (p)ppGpp with moderate affinity, with high nucleotide exchange rates and a fairly low GTP hydrolysis rate. Plays a role in control of the cell cycle, stress response, ribosome biogenesis and in those bacteria that undergo differentiation, in morphogenesis control. In Dehalococcoides mccartyi (strain ATCC BAA-2266 / KCTC 15142 / 195) (Dehalococcoides ethenogenes (strain 195)), this protein is GTPase Obg.